The chain runs to 256 residues: POU domain class 2-associating factor 1 (256 aa).

Positions 1–23 (MLWQKPTAPEQAPAPARPYQGVR) are disordered. The OCA domain maps to 16–38 (ARPYQGVRVKEPVKELLRRKRGH).

Belongs to the POU2AF family. Interacts with POU2F1/OCT1 and POU2F2/OCT2; the interaction increases POU2F1 and POU2F2 transactivation activity. Post-translationally, ubiquitinated; mediated by SIAH1 or SIAH2 and leading to its subsequent proteasomal degradation. B-cell specific. Detected in mainly in spleen, but also in thymus, periphral blood leukocyte and small intestine.

The protein localises to the nucleus. Transcriptional coactivator that specifically associates with either POU2F1/OCT1 or POU2F2/OCT2. It boosts the POU2F1/OCT1 mediated promoter activity and to a lesser extent, that of POU2F2/OCT2. It recognizes the POU domains of POU2F1/OCT1 and POU2F2/OCT2. It is essential for the response of B-cells to antigens and required for the formation of germinal centers. Regulates IL6 expression in B cells as POU2F2/OCT2 coactivator. The sequence is that of POU domain class 2-associating factor 1 from Homo sapiens (Human).